We begin with the raw amino-acid sequence, 287 residues long: Ketoacyl reductase HetN (287 aa).

11–35 serves as a coordination point for NAD(+); sequence LTGASRGLGVYIARALAKEQATVVC. Ser-142 contributes to the substrate binding site. Residue Tyr-155 is the Proton acceptor of the active site.

This sequence belongs to the short-chain dehydrogenases/reductases (SDR) family.

May be involved in repressing heterocyst differentiation and may be essential for preventing all vegetative cells from differentiating. The protein is Ketoacyl reductase HetN (hetN) of Nostoc sp. (strain PCC 7120 / SAG 25.82 / UTEX 2576).